The primary structure comprises 283 residues: uncharacterized protein (283 aa).

6 consecutive transmembrane segments (helical) span residues 28–48 (LSST…ILLI), 65–85 (LTSL…GFIL), 113–133 (LKRG…FMIV), 135–155 (ILFI…IVFI), 200–220 (LNYI…NFVV), and 246–266 (IVDV…AVFA).

It to M.jannaschii MJ0233.

The protein resides in the cell membrane. This is an uncharacterized protein from Methanocaldococcus jannaschii (strain ATCC 43067 / DSM 2661 / JAL-1 / JCM 10045 / NBRC 100440) (Methanococcus jannaschii).